Here is a 198-residue protein sequence, read N- to C-terminus: NAD(P)H dehydrogenase (quinone) (198 aa).

Residues 4–190 (VLVLYYSAYG…EGAKYQGAHV (187 aa)) form the Flavodoxin-like domain. FMN is bound by residues 10–15 (SAYGHI) and 78–80 (TRF). An NAD(+)-binding site is contributed by Tyr-12. Trp-98 serves as a coordination point for substrate. FMN is bound by residues 113 to 119 (SSATQHG) and His-134.

This sequence belongs to the WrbA family. Requires FMN as cofactor.

The enzyme catalyses a quinone + NADH + H(+) = a quinol + NAD(+). The catalysed reaction is a quinone + NADPH + H(+) = a quinol + NADP(+). The protein is NAD(P)H dehydrogenase (quinone) of Rhizobium johnstonii (strain DSM 114642 / LMG 32736 / 3841) (Rhizobium leguminosarum bv. viciae).